The primary structure comprises 95 residues: Large ribosomal subunit protein bL27 (95 aa).

The propeptide occupies 1 to 10 (MLLTMNLQLF). The disordered stretch occupies residues 12-38 (HKKGGGSTSNGRDSESKRLGAKSADGQ).

It belongs to the bacterial ribosomal protein bL27 family. In terms of processing, the N-terminus is cleaved by ribosomal processing cysteine protease Prp.

The polypeptide is Large ribosomal subunit protein bL27 (Enterococcus faecalis (strain ATCC 700802 / V583)).